Here is a 201-residue protein sequence, read N- to C-terminus: Small ribosomal subunit protein uS4c (201 aa).

The disordered stretch occupies residues 23–42; it reads SKKPRAGSNLRNQLRPGKKS. One can recognise an S4 RNA-binding domain in the interval 89-151; sequence MRLDNILFRL…QKSKSLVQNY (63 aa).

Belongs to the universal ribosomal protein uS4 family. Part of the 30S ribosomal subunit. Contacts protein S5. The interaction surface between S4 and S5 is involved in control of translational fidelity.

It localises to the plastid. The protein resides in the chloroplast. Functionally, one of the primary rRNA binding proteins, it binds directly to 16S rRNA where it nucleates assembly of the body of the 30S subunit. In terms of biological role, with S5 and S12 plays an important role in translational accuracy. The chain is Small ribosomal subunit protein uS4c (rps4) from Morus indica (Mulberry).